Reading from the N-terminus, the 462-residue chain is ATP synthase subunit beta 2 (462 aa).

Residue 151–158 (GGAGVGKT) participates in ATP binding.

It belongs to the ATPase alpha/beta chains family. In terms of assembly, F-type ATPases have 2 components, CF(1) - the catalytic core - and CF(0) - the membrane proton channel. CF(1) has five subunits: alpha(3), beta(3), gamma(1), delta(1), epsilon(1). CF(0) has three main subunits: a(1), b(2) and c(9-12). The alpha and beta chains form an alternating ring which encloses part of the gamma chain. CF(1) is attached to CF(0) by a central stalk formed by the gamma and epsilon chains, while a peripheral stalk is formed by the delta and b chains.

The protein resides in the cell inner membrane. It catalyses the reaction ATP + H2O + 4 H(+)(in) = ADP + phosphate + 5 H(+)(out). In terms of biological role, produces ATP from ADP in the presence of a proton gradient across the membrane. The catalytic sites are hosted primarily by the beta subunits. The protein is ATP synthase subunit beta 2 of Chlorobaculum tepidum (strain ATCC 49652 / DSM 12025 / NBRC 103806 / TLS) (Chlorobium tepidum).